Consider the following 372-residue polypeptide: Carbamoyl phosphate synthase small chain (372 aa).

The tract at residues methionine 1–arginine 184 is CPSase. L-glutamine-binding residues include serine 45, glycine 240, and glycine 242. The 185-residue stretch at lysine 188 to methionine 372 folds into the Glutamine amidotransferase type-1 domain. Cysteine 268 (nucleophile) is an active-site residue. Residues leucine 269, glutamine 272, asparagine 310, and tyrosine 313 each coordinate L-glutamine. Catalysis depends on residues histidine 351 and glutamate 353.

Belongs to the CarA family. Composed of two chains; the small (or glutamine) chain promotes the hydrolysis of glutamine to ammonia, which is used by the large (or ammonia) chain to synthesize carbamoyl phosphate. Tetramer of heterodimers (alpha,beta)4.

The catalysed reaction is hydrogencarbonate + L-glutamine + 2 ATP + H2O = carbamoyl phosphate + L-glutamate + 2 ADP + phosphate + 2 H(+). It carries out the reaction L-glutamine + H2O = L-glutamate + NH4(+). The protein operates within amino-acid biosynthesis; L-arginine biosynthesis; carbamoyl phosphate from bicarbonate: step 1/1. It participates in pyrimidine metabolism; UMP biosynthesis via de novo pathway; (S)-dihydroorotate from bicarbonate: step 1/3. Small subunit of the glutamine-dependent carbamoyl phosphate synthetase (CPSase). CPSase catalyzes the formation of carbamoyl phosphate from the ammonia moiety of glutamine, carbonate, and phosphate donated by ATP, constituting the first step of 2 biosynthetic pathways, one leading to arginine and/or urea and the other to pyrimidine nucleotides. The small subunit (glutamine amidotransferase) binds and cleaves glutamine to supply the large subunit with the substrate ammonia. This Campylobacter jejuni subsp. jejuni serotype O:2 (strain ATCC 700819 / NCTC 11168) protein is Carbamoyl phosphate synthase small chain.